The following is a 146-amino-acid chain: UPF0178 protein BCQ_2874 (146 aa).

It belongs to the UPF0178 family.

The polypeptide is UPF0178 protein BCQ_2874 (Bacillus cereus (strain Q1)).